The sequence spans 452 residues: Type II methyltransferase M.EcaI (452 aa).

It belongs to the N(4)/N(6)-methyltransferase family.

It catalyses the reaction a 2'-deoxyadenosine in DNA + S-adenosyl-L-methionine = an N(6)-methyl-2'-deoxyadenosine in DNA + S-adenosyl-L-homocysteine + H(+). Functionally, a beta subtype methylase, recognizes the double-stranded sequence 5'-GGTNACC-3', methylates A-5 on both strands and protects the DNA from cleavage by the EcaI endonuclease. This is Type II methyltransferase M.EcaI (ecaIM) from Enterobacter cloacae.